Reading from the N-terminus, the 705-residue chain is Protein artemis (705 aa).

At threonine 380 the chain carries Phosphothreonine. Serine 385 is modified (phosphoserine). Residues 451 to 462 show a composition bias toward acidic residues; that stretch reads EESNSDSGEELE. Disordered regions lie at residues 451-484, 535-569, and 638-675; these read EESN…NADP, PKLC…GWDS, and TLSG…AELP. The span at 546–559 shows a compositional bias: low complexity; sequence THISSQNSSQSTHI. The span at 560-569 shows a compositional bias: polar residues; it reads TDQGSQGWDS. Positions 652 to 662 are enriched in low complexity; the sequence is SSTRADSQSSS. Serine 658 carries the phosphoserine; by ATM modification.

It belongs to the DNA repair metallo-beta-lactamase (DRMBL) family. As to quaternary structure, interacts with LIG4; the interaction is direct. Interacts with ATM. Interacts with BRCA1. Interacts with PRKDC. Interacts with TP53BP1. Also exhibits ATM- and phosphorylation-dependent interaction with the MRN complex, composed of MRE11, RAD50, and NBN. Phosphorylation on undefined residues by PRKDC may stimulate endonucleolytic activity on 5' and 3' hairpins and overhangs. PRKDC must remain present, even after phosphorylation, for efficient hairpin opening. Also phosphorylated by ATM in response to ionizing radiation (IR) and by ATR in response to ultraviolet (UV) radiation.

It localises to the nucleus. Functionally, required for V(D)J recombination, the process by which exons encoding the antigen-binding domains of immunoglobulins and T-cell receptor proteins are assembled from individual V, (D), and J gene segments. V(D)J recombination is initiated by the lymphoid specific RAG endonuclease complex, which generates site specific DNA double strand breaks (DSBs). These DSBs present two types of DNA end structures: hairpin sealed coding ends and phosphorylated blunt signal ends. These ends are independently repaired by the non homologous end joining (NHEJ) pathway to form coding and signal joints respectively. This protein likely exhibits single-strand specific 5'-3' exonuclease activity in isolation, and may acquire endonucleolytic activity on 5' and 3' hairpins and overhangs when in a complex with PRKDC. The latter activity may be required specifically for the resolution of closed hairpins prior to the formation of the coding joint. May also be required for the repair of complex DSBs induced by ionizing radiation, which require substantial end-processing prior to religation by NHEJ. The sequence is that of Protein artemis (Dclre1c) from Mus musculus (Mouse).